The sequence spans 487 residues: Probable UDP-N-acetylglucosamine pyrophosphorylase (487 aa).

A Substrate binding motif is present at residues 105–108 (LAGG). UTP contacts are provided by residues 105–108 (LAGG), Lys119, Gln198, and Gly225. Asn226 provides a ligand contact to substrate. Asp256 provides a ligand contact to UTP. Positions 307-308 (EY) match the Substrate binding motif. Residue Lys382 participates in UTP binding. Lys412 lines the substrate pocket.

It belongs to the UDPGP type 1 family.

It localises to the cytoplasm. It carries out the reaction N-acetyl-alpha-D-glucosamine 1-phosphate + UTP + H(+) = UDP-N-acetyl-alpha-D-glucosamine + diphosphate. The protein operates within nucleotide-sugar biosynthesis; UDP-N-acetyl-alpha-D-glucosamine biosynthesis; UDP-N-acetyl-alpha-D-glucosamine from N-acetyl-alpha-D-glucosamine 1-phosphate: step 1/1. The polypeptide is Probable UDP-N-acetylglucosamine pyrophosphorylase (uap1) (Dictyostelium discoideum (Social amoeba)).